A 189-amino-acid polypeptide reads, in one-letter code: Inosine triphosphate pyrophosphatase (189 aa).

ITP is bound at residue 8 to 13 (TGNANK). E39 provides a ligand contact to Mg(2+). ITP contacts are provided by residues K51, 67-68 (DT), K84, 143-146 (FGWD), K167, and 172-173 (HR).

Belongs to the HAM1 NTPase family. As to quaternary structure, homodimer. Mg(2+) serves as cofactor. The cofactor is Mn(2+).

The protein resides in the cytoplasm. It localises to the nucleus. The enzyme catalyses ITP + H2O = IMP + diphosphate + H(+). It carries out the reaction dITP + H2O = dIMP + diphosphate + H(+). The catalysed reaction is XTP + H2O = XMP + diphosphate + H(+). Functionally, pyrophosphatase that hydrolyzes non-canonical purine nucleotides such as inosine triphosphate (ITP), deoxyinosine triphosphate (dITP) or xanthosine 5'-triphosphate (XTP) to their respective monophosphate derivatives. The enzyme does not distinguish between the deoxy- and ribose forms. Probably excludes non-canonical purines from RNA and DNA precursor pools, thus preventing their incorporation into RNA and DNA and avoiding chromosomal lesions. This chain is Inosine triphosphate pyrophosphatase, found in Cryptococcus neoformans var. neoformans serotype D (strain JEC21 / ATCC MYA-565) (Filobasidiella neoformans).